Here is an 880-residue protein sequence, read N- to C-terminus: MKQLTGAQIRQMFLDFFQEKGHAVEPSASLVPHEDPSLLWINSGVATLKKYFDGRVIPQNPRITNAQKSIRTNDIENVGKTARHHTFFEMLGNFSIGDYFKEEAITWAWEFLTSDKWIGFDKELLSVTIHPEDEEAFTIWNEKMGVPKERIIRLEENFWDIGEGPSGPNTEIFYDRGEAYGNDFSDPELYPGGENERYLEVWNLVFSQFNHNPDGSYTPLPKKNIDTGMGLERMTSIVQDVPTNFDTDLFMPMIGATETISGEKYRNGDLEKDMAFKVIADHIRTVTFAVGDGALPSNEGRGYVLRRLLRRAVRYSKKLNINRPFMFELVPVVGEVMKDFYPEVLEKKDFIAKVVKNEEERFHETLHDGEAILAEVIAKAKEEKTTVISGVDAFRLYDTYGFPIELTEEYAEEAGMTVDHEGFENEMEKQRERARAARQDVDSMQVQGGVLGEVKVASEFVGYGTVATESNVVALVKNGEYTDSLQVGEEGQLMLDVTPFYAESGGQIADRGYLLADGVKVLVKDVQKAPNGQNLHKVVVEEGTLTKDAAVKAIIDTKNRSSVVKNHTATHLLHQALKDVLGTHVNQAGSLVTSERLRFDFSHFGQVQADELEKIERIVNEKIWESIDVEISQKAIEEAKEMGAMALFGEKYGDVVRVVQVGDYSLELCGGCHVDNTASIGIFKIVAESGIGAGTRRIEAVTGKSAYELMNDQVGLLKEAAGKMKTNPKDILTRVDGLFAEVKQLQKENESLAAKLSNIEAGNLTDSVMTVDGVNVLAAKVNVADMNNLRTMMDDLKNKLESAVVVLASVNDDKVNILAGVTKDLISQGYHAGKLVKEVASRCGGGGGGRPDMAQAGGKNPAQVEEALAFVQEYVKSVSK.

Positions 567, 571, 669, and 673 each coordinate Zn(2+).

It belongs to the class-II aminoacyl-tRNA synthetase family. Zn(2+) is required as a cofactor.

It localises to the cytoplasm. It carries out the reaction tRNA(Ala) + L-alanine + ATP = L-alanyl-tRNA(Ala) + AMP + diphosphate. In terms of biological role, catalyzes the attachment of alanine to tRNA(Ala) in a two-step reaction: alanine is first activated by ATP to form Ala-AMP and then transferred to the acceptor end of tRNA(Ala). Also edits incorrectly charged Ser-tRNA(Ala) and Gly-tRNA(Ala) via its editing domain. This is Alanine--tRNA ligase from Bacillus cereus (strain ZK / E33L).